Here is a 531-residue protein sequence, read N- to C-terminus: Pancreatic secretory granule membrane major glycoprotein GP2 (531 aa).

The signal sequence occupies residues 1-21 (MVGCDLLWLAAASCVLTLVSP). The N-linked (GlcNAc...) asparagine glycan is linked to Asn33. The beta hairpin stretch occupies residues 34–53 (SSNLDLDCGSPDSPSSGICF). Cystine bridges form between Cys41–Cys52, Cys56–Cys151, Cys79–Cys169, Cys101–Cys139, Cys107–Cys174, Cys132–Cys140, Cys184–Cys194, Cys188–Cys203, Cys205–Cys235, Cys223–Cys314, and Cys255–Cys278. Positions 54–74 (DPCQNHTVLNDPTRSTENNDS) are D10C. 2 N-linked (GlcNAc...) asparagine glycosylation sites follow: Asn58 and Asn72. An EGF-like domain is found at 180–224 (APKNCEITCRPEEECVFQNNNWSCVCRQDLHVSDSQSLQPLLDCG). N-linked (GlcNAc...) asparagine glycosylation is present at Asn200. Residues 222 to 315 (DCGDNEIKVK…FRVNVNFQCA (94 aa)) form a ZP-N region. The 257-residue stretch at 222 to 478 (DCGDNEIKVK…PSCSTNRLRS (257 aa)) folds into the ZP domain. Residues Asn256 and Asn285 are each glycosylated (N-linked (GlcNAc...) asparagine). A flexible ZP-N/ZP-C linker region spans residues 316–339 (YPLDMSVSLETALQPIVSSLTVDV). Positions 340 to 351 (DGAGEFNVKMAL) are internal hydrophobic patch (IHP). The tract at residues 340–478 (DGAGEFNVKM…PSCSTNRLRS (139 aa)) is ZP-C. 3 disulfide bridges follow: Cys395/Cys455, Cys416/Cys471, and Cys460/Cys467. Residues 485-493 (YNRVLDLGP) are external hydrophobic patch (EHP).

As to quaternary structure, interacts with SYCN. Interacts with bacterial adhesin fimH. N-glycosylated. As to expression, specifically expressed by M (microfold) cells which are atypical epithelial cells of the intestine.

The protein localises to the zymogen granule membrane. It localises to the secreted. It is found in the cell membrane. The protein resides in the apical cell membrane. Its subcellular location is the membrane raft. The protein localises to the endosome. Functions as an intestinal M-cell transcytotic receptor specific of type-I-piliated bacteria that participates in the mucosal immune response toward these bacteria. At the apical membrane of M-cells it binds fimH, a protein of the bacteria type I pilus tip. Internalizes bound bacteria, like E.coli and S.typhimurium, from the lumen of the intestine and delivers them, through M-cells, to the underlying organized lymphoid follicles where they are captured by antigen-presenting dendritic cells to elicit a mucosal immune response. This is Pancreatic secretory granule membrane major glycoprotein GP2 from Mus musculus (Mouse).